Reading from the N-terminus, the 108-residue chain is Small ribosomal subunit protein bS18 (108 aa).

The segment covering 1 to 12 (MSDITKQPANNI) has biased composition (polar residues). The interval 1–33 (MSDITKQPANNISSDDKKEVAKASAKSSVEGAK) is disordered.

The protein belongs to the bacterial ribosomal protein bS18 family. As to quaternary structure, part of the 30S ribosomal subunit. Forms a tight heterodimer with protein bS6.

Functionally, binds as a heterodimer with protein bS6 to the central domain of the 16S rRNA, where it helps stabilize the platform of the 30S subunit. This Mycoplasmoides gallisepticum (strain R(low / passage 15 / clone 2)) (Mycoplasma gallisepticum) protein is Small ribosomal subunit protein bS18.